The primary structure comprises 381 residues: Actin-binding Rho-activating protein (381 aa).

Disordered regions lie at residues 39–156 (ENSI…SHGS) and 179–207 (QEEP…PEQD). Residues 69–79 (PTSHQKAQSAP) show a composition bias toward polar residues. Over residues 97-110 (KAPEVSHIKKKEVS) the composition is skewed to basic and acidic residues. Phosphoserine occurs at positions 156 and 188. Basic and acidic residues predominate over residues 179-188 (QEEPTWRSDS). Actin-binding regions lie at residues 199–299 (EAEE…AERA) and 300–381 (KRAE…TLLK). Interaction with actin regions lie at residues 240-285 (SPVG…GDEG) and 352-381 (MRAR…TLLK).

As to quaternary structure, binds F-actin and ABLIM1, ABLIM2 and ABLIM3. Interaction with ABLIM2 and ABLIM3 enhances activity.

It localises to the cytoplasm. It is found in the myofibril. Its subcellular location is the sarcomere. The protein resides in the cytoskeleton. Its function is as follows. Acts as an activator of serum response factor (SRF)-dependent transcription possibly by inducing nuclear translocation of MKL1 or MKL2 and through a mechanism requiring Rho-actin signaling. This Homo sapiens (Human) protein is Actin-binding Rho-activating protein.